We begin with the raw amino-acid sequence, 141 residues long: Ribosome maturation factor RimP (141 aa).

It belongs to the RimP family.

Its subcellular location is the cytoplasm. In terms of biological role, required for maturation of 30S ribosomal subunits. This chain is Ribosome maturation factor RimP, found in Laribacter hongkongensis (strain HLHK9).